Consider the following 69-residue polypeptide: Amphipathic peptide StCT2 (69 aa).

A signal peptide spans 1 to 23 (MKTQFAVLIISMILMQMLVQTEA). Isoleucine 37 carries the isoleucine amide modification. Residues 41 to 69 (SLRNQDQFDNMFDSDLSDADLKLLDDLFD) constitute a propeptide that is removed on maturation.

This sequence belongs to the non-disulfide-bridged peptide (NDBP) superfamily. Short antimicrobial peptide (group 4) family. In terms of tissue distribution, expressed by the venom gland.

It localises to the secreted. Its subcellular location is the target cell membrane. Antimicrobial peptide that is rapidly bactericidal against Gram-positive bacteria. In Scorpiops tibetanus (Scorpion), this protein is Amphipathic peptide StCT2.